A 148-amino-acid chain; its full sequence is MKVILLQDVKGLGKKGEVVNASDGYARNFLFPKKLAAEATQGNVKTLNEQKTSQELKKQQEVEEAKELAKKIENSPIEIIAKAGDGGRLFGSVTSKDLAETLEKQHHIKIDKRKITLPEPIRELGVRHVEIKLHVGVVGKLTVNIKEA.

The protein belongs to the bacterial ribosomal protein bL9 family.

Binds to the 23S rRNA. The protein is Large ribosomal subunit protein bL9 of Alkaliphilus oremlandii (strain OhILAs) (Clostridium oremlandii (strain OhILAs)).